We begin with the raw amino-acid sequence, 98 residues long: NADH-ubiquinone oxidoreductase chain 4L (98 aa).

3 consecutive transmembrane segments (helical) span residues 1–21 (MTLV…GLLM), 26–46 (LMSA…LATI), and 59–79 (MPII…ALLV).

The protein belongs to the complex I subunit 4L family. In terms of assembly, core subunit of respiratory chain NADH dehydrogenase (Complex I) which is composed of 45 different subunits.

Its subcellular location is the mitochondrion inner membrane. It carries out the reaction a ubiquinone + NADH + 5 H(+)(in) = a ubiquinol + NAD(+) + 4 H(+)(out). Core subunit of the mitochondrial membrane respiratory chain NADH dehydrogenase (Complex I) which catalyzes electron transfer from NADH through the respiratory chain, using ubiquinone as an electron acceptor. Part of the enzyme membrane arm which is embedded in the lipid bilayer and involved in proton translocation. The protein is NADH-ubiquinone oxidoreductase chain 4L (MT-ND4L) of Pontoporia blainvillei (Franciscana).